A 124-amino-acid chain; its full sequence is Peptidyl-tRNA hydrolase (124 aa).

Belongs to the PTH2 family.

Its subcellular location is the cytoplasm. The enzyme catalyses an N-acyl-L-alpha-aminoacyl-tRNA + H2O = an N-acyl-L-amino acid + a tRNA + H(+). In terms of biological role, the natural substrate for this enzyme may be peptidyl-tRNAs which drop off the ribosome during protein synthesis. The chain is Peptidyl-tRNA hydrolase from Aeropyrum pernix (strain ATCC 700893 / DSM 11879 / JCM 9820 / NBRC 100138 / K1).